A 246-amino-acid polypeptide reads, in one-letter code: Protein 3F (246 aa).

The first 19 residues, 1-19 (MKLLSKLILTLALATYASA), serve as a signal peptide directing secretion. N-linked (GlcNAc...) asparagine glycosylation occurs at Asn-52. A compositionally biased stretch (basic and acidic residues) spans 113-124 (EVRPIDRLKDNA). Residues 113 to 223 (EVRPIDRLKD…EEAEHVEKGA (111 aa)) form a disordered region. Positions 126–145 (AANTENAQKSPNTQSTQKGS) are enriched in polar residues. 3 repeat units span residues 145-153 (SPKSDAKEA), 154-162 (SPKTDAKEA), and 163-171 (SPKSDAKEA). The tract at residues 145-176 (SPKSDAKEASPKTDAKEASPKSDAKEASPKTD) is 3.5 X 9 AA tandem repeats of S-P-K-[ST]-D-A-K-E-A. The span at 146–177 (PKSDAKEASPKTDAKEASPKSDAKEASPKTDT) shows a compositional bias: basic and acidic residues. A 4; truncated repeat occupies 172–176 (SPKTD). The segment covering 181–213 (SSPKTDTKSSTQKPSSSSDSSKAKAEANTAANN) has biased composition (low complexity).

In Dictyostelium discoideum (Social amoeba), this protein is Protein 3F (pspG).